The sequence spans 258 residues: UPF0246 protein YE0603 (258 aa).

It belongs to the UPF0246 family.

The polypeptide is UPF0246 protein YE0603 (Yersinia enterocolitica serotype O:8 / biotype 1B (strain NCTC 13174 / 8081)).